We begin with the raw amino-acid sequence, 490 residues long: Probable cytosol aminopeptidase (490 aa).

Residues Lys-258 and Asp-263 each coordinate Mn(2+). Residue Lys-270 is part of the active site. Residues Asp-282, Asp-341, and Glu-343 each coordinate Mn(2+). Residue Arg-345 is part of the active site.

The protein belongs to the peptidase M17 family. The cofactor is Mn(2+).

It localises to the cytoplasm. It catalyses the reaction Release of an N-terminal amino acid, Xaa-|-Yaa-, in which Xaa is preferably Leu, but may be other amino acids including Pro although not Arg or Lys, and Yaa may be Pro. Amino acid amides and methyl esters are also readily hydrolyzed, but rates on arylamides are exceedingly low.. The enzyme catalyses Release of an N-terminal amino acid, preferentially leucine, but not glutamic or aspartic acids.. Functionally, presumably involved in the processing and regular turnover of intracellular proteins. Catalyzes the removal of unsubstituted N-terminal amino acids from various peptides. This chain is Probable cytosol aminopeptidase, found in Microcystis aeruginosa (strain NIES-843 / IAM M-2473).